Reading from the N-terminus, the 379-residue chain is tRNA-specific 2-thiouridylase MnmA (379 aa).

Residues 23–30 (AMSGGVDS) and L49 each bind ATP. The active-site Nucleophile is C117. A disulfide bond links C117 and C214. G141 contributes to the ATP binding site. An interaction with tRNA region spans residues 163–165 (RDQ). The active-site Cysteine persulfide intermediate is the C214.

This sequence belongs to the MnmA/TRMU family.

Its subcellular location is the cytoplasm. The catalysed reaction is S-sulfanyl-L-cysteinyl-[protein] + uridine(34) in tRNA + AH2 + ATP = 2-thiouridine(34) in tRNA + L-cysteinyl-[protein] + A + AMP + diphosphate + H(+). Functionally, catalyzes the 2-thiolation of uridine at the wobble position (U34) of tRNA, leading to the formation of s(2)U34. The polypeptide is tRNA-specific 2-thiouridylase MnmA (Cereibacter sphaeroides (strain ATCC 17023 / DSM 158 / JCM 6121 / CCUG 31486 / LMG 2827 / NBRC 12203 / NCIMB 8253 / ATH 2.4.1.) (Rhodobacter sphaeroides)).